A 114-amino-acid chain; its full sequence is Protein ORF3 (114 aa).

Residues 1–28 are membrane association; it reads MGSRPCALGLFCCCSSCFCLCCPRHRPV. 2 hydrophobic regions span residues 6 to 22 and 33 to 53; these read CALG…CLCC and AAVG…GLIL. The induction of host SIRPA expression stretch occupies residues 6–22; sequence CALGLFCCCSSCFCLCC. Residues 28-68 are interaction with host HPX; that stretch reads VSRLAAAVGGAAAVPAVVSGVTGLILSPSQSPIFIQPTPSP. The interaction with the capsid protein stretch occupies residues 48 to 72; that stretch reads VTGLILSPSQSPIFIQPTPSPPMSP. Ser-71 carries the phosphoserine; by host modification. Residues 72–114 are homodimerization, and interaction with host AMBP/bikunin; it reads PLRPGLDLVFANPPDHSAPLGVTRPSAPPLPHVVDLPQLGPRR. A disordered region spans residues 91–114; it reads LGVTRPSAPPLPHVVDLPQLGPRR. Residues 95–104 form an interaction with host SRC, HCK, FYN, PIK3R3 and GRB2 region; the sequence is RPSAPPLPHV. The PTAP/PSAP motif signature appears at 96–99; it reads PSAP.

The protein belongs to the hepevirus ORF3 protein family. In terms of assembly, forms homooligomers. Interacts with host SRC, HCK, FYN, PIK3R3 and GRB2 (via SH3 domain); binding does not activate the kinases. Interacts with host AMBP/bikunin and AMBP/alpha-1-microglobulin peptides. Interacts with host HPX/hemopexin. Interacts (when phosphorylated) with capsid protein ORF2. Interacts with host TSG101; this interaction plays a role in viral release from the host cell. Interacts with host SIRPA; this interaction down-regulates the phosphorylation of host IRF3. Post-translationally, palmitoylated in the N-terminus.

The protein resides in the host endoplasmic reticulum membrane. Its subcellular location is the host cytoplasm. The protein localises to the host cytoskeleton. It localises to the virion. It is found in the host cell membrane. Functionally, small multifunctional phosphoprotein involved in virion morphogenesis, egress and counteracting host innate immunity. Plays critical roles in the final steps of viral release by interacting with host TSG101, a member of the vacuolar protein-sorting pathway and using other cellular host proteins involved in vesicle formation pathway. Also acts as a viroporin and forms ion conductive pores allowing viral particle release. Impairs the generation of type I interferon by down-regulating host TLR3 and TLR7 as well as their downstream signaling pathways. Down-regulates the phosphorylation of host IRF3 via the interaction with host SIRP-alpha, thereby inhibiting IFN-I expression. Interacts with host microtubules. The sequence is that of Protein ORF3 from Hepatitis E virus genotype 1 (isolate Human/China/HeBei/1987) (HEV).